The sequence spans 415 residues: Glutamyl-tRNA reductase (415 aa).

Substrate contacts are provided by residues 49-52, Ser104, 109-111, and Gln115; these read TCNR and EPQ. Cys50 functions as the Nucleophile in the catalytic mechanism. 184–189 provides a ligand contact to NADP(+); that stretch reads GAGEMI.

The protein belongs to the glutamyl-tRNA reductase family. In terms of assembly, homodimer.

It catalyses the reaction (S)-4-amino-5-oxopentanoate + tRNA(Glu) + NADP(+) = L-glutamyl-tRNA(Glu) + NADPH + H(+). The protein operates within porphyrin-containing compound metabolism; protoporphyrin-IX biosynthesis; 5-aminolevulinate from L-glutamyl-tRNA(Glu): step 1/2. Its function is as follows. Catalyzes the NADPH-dependent reduction of glutamyl-tRNA(Glu) to glutamate 1-semialdehyde (GSA). The polypeptide is Glutamyl-tRNA reductase (Neisseria meningitidis serogroup B (strain ATCC BAA-335 / MC58)).